We begin with the raw amino-acid sequence, 306 residues long: Recombination-associated protein RdgC (306 aa).

Belongs to the RdgC family.

It localises to the cytoplasm. The protein localises to the nucleoid. May be involved in recombination. The polypeptide is Recombination-associated protein RdgC (Pseudomonas aeruginosa (strain ATCC 15692 / DSM 22644 / CIP 104116 / JCM 14847 / LMG 12228 / 1C / PRS 101 / PAO1)).